Here is a 101-residue protein sequence, read N- to C-terminus: MAKKSAIEKNNRRKKMTKNAAPKRARLKAIIADKSKPMEERFAATLKLAEMPRNSSATRIRNRCDLTGRPRSVYRLNKLSRIAIRDLGSRGLVPGLVKSSW.

Basic and acidic residues predominate over residues 1–10; the sequence is MAKKSAIEKN. Residues 1–23 form a disordered region; that stretch reads MAKKSAIEKNNRRKKMTKNAAPK. Residues 11 to 23 are compositionally biased toward basic residues; that stretch reads NRRKKMTKNAAPK.

The protein belongs to the universal ribosomal protein uS14 family. Part of the 30S ribosomal subunit. Contacts proteins S3 and S10.

Its function is as follows. Binds 16S rRNA, required for the assembly of 30S particles and may also be responsible for determining the conformation of the 16S rRNA at the A site. The chain is Small ribosomal subunit protein uS14 from Rhodopseudomonas palustris (strain TIE-1).